Here is a 191-residue protein sequence, read N- to C-terminus: Ribonuclease HII (191 aa).

The RNase H type-2 domain maps to 7–191 (ILMAGVDEVG…YSPVADLISK (185 aa)). Residues D13, E14, and D103 each coordinate a divalent metal cation.

The protein belongs to the RNase HII family. The cofactor is Mn(2+). It depends on Mg(2+) as a cofactor.

The protein localises to the cytoplasm. The catalysed reaction is Endonucleolytic cleavage to 5'-phosphomonoester.. Its function is as follows. Endonuclease that specifically degrades the RNA of RNA-DNA hybrids. This Legionella pneumophila (strain Corby) protein is Ribonuclease HII.